Here is a 194-residue protein sequence, read N- to C-terminus: Orotate phosphoribosyltransferase (194 aa).

117 to 125 is a binding site for 5-phospho-alpha-D-ribose 1-diphosphate; the sequence is EDIVTTGLS. Residues Thr-121 and Arg-149 each coordinate orotate.

This sequence belongs to the purine/pyrimidine phosphoribosyltransferase family. PyrE subfamily. In terms of assembly, homodimer. The cofactor is Mg(2+).

It catalyses the reaction orotidine 5'-phosphate + diphosphate = orotate + 5-phospho-alpha-D-ribose 1-diphosphate. It participates in pyrimidine metabolism; UMP biosynthesis via de novo pathway; UMP from orotate: step 1/2. Catalyzes the transfer of a ribosyl phosphate group from 5-phosphoribose 1-diphosphate to orotate, leading to the formation of orotidine monophosphate (OMP). The chain is Orotate phosphoribosyltransferase from Parvibaculum lavamentivorans (strain DS-1 / DSM 13023 / NCIMB 13966).